A 514-amino-acid polypeptide reads, in one-letter code: Transmembrane protein 151B (514 aa).

The interval 1 to 40 (MSAEGEPAEAVAETPANSPGEEAAAAAATTDVDVREEQRP) is disordered. 3 helical membrane-spanning segments follow: residues 57 to 77 (CLLL…CQVT), 104 to 124 (YVYI…VECW), and 286 to 306 (PWYV…SWPL).

Belongs to the TMEM151 family.

It localises to the membrane. The chain is Transmembrane protein 151B (tmem151b) from Xenopus tropicalis (Western clawed frog).